A 141-amino-acid polypeptide reads, in one-letter code: Nucleoside diphosphate kinase (141 aa).

6 residues coordinate ATP: lysine 11, phenylalanine 59, arginine 87, threonine 93, arginine 104, and asparagine 114. The active-site Pros-phosphohistidine intermediate is the histidine 117.

It belongs to the NDK family. Homotetramer. Requires Mg(2+) as cofactor.

Its subcellular location is the cytoplasm. The catalysed reaction is a 2'-deoxyribonucleoside 5'-diphosphate + ATP = a 2'-deoxyribonucleoside 5'-triphosphate + ADP. It catalyses the reaction a ribonucleoside 5'-diphosphate + ATP = a ribonucleoside 5'-triphosphate + ADP. Major role in the synthesis of nucleoside triphosphates other than ATP. The ATP gamma phosphate is transferred to the NDP beta phosphate via a ping-pong mechanism, using a phosphorylated active-site intermediate. The polypeptide is Nucleoside diphosphate kinase (Leptothrix cholodnii (strain ATCC 51168 / LMG 8142 / SP-6) (Leptothrix discophora (strain SP-6))).